Reading from the N-terminus, the 367-residue chain is MEAERLNAIESSLADLRRRAGELRGYLDYDVKSERLAEVNKQLEDPNVWNDSKNAQALGREKKSLESVVTTLTALDNDLRDAQDLFELAHEEGDEETLVATESDAAKLEARVADIEFRRMFSNPADPNNCFIDIQAGAGGTEACDWASMLLRQYLRYCERKGFKAEVLEESDGDVAGIKNATIKVSGEYAYGYLRTETGIHRLVRKSPFDSSGGRHTSFSSVFVYPEIDDSIEVEINPADLRIDTYRASGAGGQHINKTDSAVRITHMPTGIVVQCQNDRSQHRNRAEAMAMLKSRLFEAELRKRQAEQDKLESSKTDVGWGHQIRSYVLDQSRVKDLRTNVEMSNTKAVLDGDLDDFISASLKQGV.

N5-methylglutamine is present on Gln-254.

Belongs to the prokaryotic/mitochondrial release factor family. Methylated by PrmC. Methylation increases the termination efficiency of RF2.

The protein resides in the cytoplasm. Functionally, peptide chain release factor 2 directs the termination of translation in response to the peptide chain termination codons UGA and UAA. This chain is Peptide chain release factor 2, found in Burkholderia mallei (strain ATCC 23344).